A 564-amino-acid polypeptide reads, in one-letter code: Septation ring formation regulator EzrA (564 aa).

Over 1 to 4 (MVLY) the chain is Extracellular. The chain crosses the membrane as a helical span at residues 5–23 (IILAIIVIILIAVGVLFYL). The Cytoplasmic portion of the chain corresponds to 24-564 (RSNKRQIIEK…KHIEEEVIKQ (541 aa)). Coiled coils occupy residues 99–138 (SFNA…YKDN), 190–223 (DGNY…LIRE), 271–300 (LISR…LIEH), 350–435 (VRQF…RRLL), and 471–550 (VKQL…ESVE).

Belongs to the EzrA family.

It is found in the cell membrane. Functionally, negative regulator of FtsZ ring formation; modulates the frequency and position of FtsZ ring formation. Inhibits FtsZ ring formation at polar sites. Interacts either with FtsZ or with one of its binding partners to promote depolymerization. In Staphylococcus aureus (strain Mu3 / ATCC 700698), this protein is Septation ring formation regulator EzrA.